The following is a 197-amino-acid chain: Adenylate kinase 1 (197 aa).

19-24 (GSGKGT) serves as a coordination point for ATP. An NMP region spans residues 39 to 68 (SSGDLLRAEVQSGSPKGKELKAMMERGELV). AMP contacts are provided by residues serine 40, arginine 45, 95–98 (GYPR), and glutamine 102. Positions 132-142 (KRAETSNRVDD) are LID. Arginine 133 contributes to the ATP binding site. Residues arginine 139 and arginine 150 each contribute to the AMP site. Residue glycine 178 coordinates ATP.

This sequence belongs to the adenylate kinase family. AK1 subfamily. As to quaternary structure, monomer. It depends on Mg(2+) as a cofactor.

The protein localises to the cytoplasm. It catalyses the reaction AMP + ATP = 2 ADP. The protein operates within purine metabolism; purine nucleotide biosynthesis. In terms of biological role, catalyzes the reversible transfer of the terminal phosphate group between ATP and AMP. Plays an important role in cellular energy homeostasis and in adenine nucleotide metabolism. This is Adenylate kinase 1 from Schistosoma mansoni (Blood fluke).